Here is a 498-residue protein sequence, read N- to C-terminus: ATP synthase subunit beta, chloroplastic (498 aa).

172–179 (GGAGVGKT) is an ATP binding site.

Belongs to the ATPase alpha/beta chains family. As to quaternary structure, F-type ATPases have 2 components, CF(1) - the catalytic core - and CF(0) - the membrane proton channel. CF(1) has five subunits: alpha(3), beta(3), gamma(1), delta(1), epsilon(1). CF(0) has four main subunits: a(1), b(1), b'(1) and c(9-12).

Its subcellular location is the plastid. It localises to the chloroplast thylakoid membrane. The catalysed reaction is ATP + H2O + 4 H(+)(in) = ADP + phosphate + 5 H(+)(out). In terms of biological role, produces ATP from ADP in the presence of a proton gradient across the membrane. The catalytic sites are hosted primarily by the beta subunits. This chain is ATP synthase subunit beta, chloroplastic, found in Solanum lycopersicum (Tomato).